The chain runs to 293 residues: Pyridoxal 5'-phosphate synthase subunit PdxS (293 aa).

Asp23 contributes to the D-ribose 5-phosphate binding site. Residue Lys80 is the Schiff-base intermediate with D-ribose 5-phosphate of the active site. Residue Gly152 participates in D-ribose 5-phosphate binding. Arg164 contacts D-glyceraldehyde 3-phosphate. Residues Gly213 and 234-235 contribute to the D-ribose 5-phosphate site; that span reads GS.

This sequence belongs to the PdxS/SNZ family. As to quaternary structure, in the presence of PdxT, forms a dodecamer of heterodimers.

The enzyme catalyses aldehydo-D-ribose 5-phosphate + D-glyceraldehyde 3-phosphate + L-glutamine = pyridoxal 5'-phosphate + L-glutamate + phosphate + 3 H2O + H(+). Its pathway is cofactor biosynthesis; pyridoxal 5'-phosphate biosynthesis. Its function is as follows. Catalyzes the formation of pyridoxal 5'-phosphate from ribose 5-phosphate (RBP), glyceraldehyde 3-phosphate (G3P) and ammonia. The ammonia is provided by the PdxT subunit. Can also use ribulose 5-phosphate and dihydroxyacetone phosphate as substrates, resulting from enzyme-catalyzed isomerization of RBP and G3P, respectively. The polypeptide is Pyridoxal 5'-phosphate synthase subunit PdxS (Thermus thermophilus (strain ATCC BAA-163 / DSM 7039 / HB27)).